The sequence spans 802 residues: Mitogen-activated protein kinase kinase kinase 20 (802 aa).

S2 is subject to N-acetylserine. Residues S2, S3, and S7 each carry the phosphoserine modification. One can recognise a Protein kinase domain in the interval 16-277; that stretch reads LQFFENCGGG…NLPDQCNSFL (262 aa). ATP is bound by residues 22 to 30 and K45; that span reads CGGGSFGSV. D133 functions as the Proton acceptor in the catalytic mechanism. At T161 the chain carries Phosphothreonine; by autocatalysis. S165 bears the Phosphoserine; by autocatalysis mark. S275 and S302 each carry phosphoserine. The interval 287–308 is leucine-zipper; sequence IEATLERLKKLERDLSFKEQEL. The region spanning 339 to 410 is the SAM domain; that stretch reads WTEDDVYFWV…KSAIEKLTHD (72 aa). Residues K434, Q453, and S567 each carry the phosphoserine modification. The residue at position 586 (T586) is a Phosphothreonine. 3 positions are modified to phosphoserine: S587, S593, and S599. The segment covering 624-642 has biased composition (polar residues); the sequence is YQQITPSINPSRSSSPTQY. Residues 624–802 are disordered; it reads YQQITPSINP…RGNYRGRRNF (179 aa). T628 carries the phosphothreonine modification. A phosphoserine mark is found at S634, S638, S649, S650, and S661. Low complexity predominate over residues 643–666; sequence GLSRNFSSLNLSSRDSGFSSLNDS. Residues 667–678 show a composition bias toward basic and acidic residues; sequence SSERGRYSDRSR. The segment at 670-713 is sensing domain (S); the sequence is RGRYSDRSRNKYYRGSVSLNSSPKGRYGGKSQHSTPSRERYSGK. S685, S720, S727, and S733 each carry phosphoserine. Positions 728 to 741 are enriched in basic and acidic residues; sequence PDFKRSPNDHDRRV. A Phosphothreonine modification is found at T744. A C-terminal domain (CTD) region spans residues 776–802; sequence RKKTHRQLSAKTSKERTRGNYRGRRNF.

Belongs to the protein kinase superfamily. STE Ser/Thr protein kinase family. MAP kinase kinase kinase subfamily. Homodimer. Interacts with ZNF33A. Component of a signaling complex containing at least AKAP13, PKN1, MAPK14, MAP3K20 and MAP2K3. Within this complex, AKAP13 interacts directly with PKN1, which in turn recruits MAPK14, MAP2K3 and MAP3K20. Interacts with EIF2AK4/GCN2; promoting EIF2AK4/GCN2 kinase activity. In terms of assembly, interacts with isoform ZAKbeta. As to quaternary structure, interacts with isoform ZAKalpha. Requires Mg(2+) as cofactor. Activated by phosphorylation by PKN1, followed by autophosphorylation on Thr-161 and Ser-165. Autophosphorylation in response to ribotoxic stress promotes dissociation from colliding ribosomes and activation.

The protein localises to the cytoplasm. It localises to the nucleus. It catalyses the reaction L-seryl-[protein] + ATP = O-phospho-L-seryl-[protein] + ADP + H(+). The catalysed reaction is L-threonyl-[protein] + ATP = O-phospho-L-threonyl-[protein] + ADP + H(+). Activated in response to stress, such as ribosomal stress, osmotic shock and ionizing radiation. Activated by phosphorylation by PKN1, followed by autophosphorylation on Thr-161 and Ser-165. Its function is as follows. Stress-activated component of a protein kinase signal transduction cascade that promotes programmed cell death in response to various stress, such as ribosomal stress, osmotic shock and ionizing radiation. Acts by catalyzing phosphorylation of MAP kinase kinases, leading to activation of the JNK (MAPK8/JNK1, MAPK9/JNK2 and/or MAPK10/JNK3) and MAP kinase p38 (MAPK11, MAPK12, MAPK13 and/or MAPK14) pathways. Activates JNK through phosphorylation of MAP2K4/MKK4 and MAP2K7/MKK7, and MAP kinase p38 gamma (MAPK12) via phosphorylation of MAP2K3/MKK3 and MAP2K6/MKK6. Involved in stress associated with adrenergic stimulation: contributes to cardiac decompensation during periods of acute cardiac stress. May be involved in regulation of S and G2 cell cycle checkpoint by mediating phosphorylation of CHEK2. Functionally, key component of the stress-activated protein kinase signaling cascade in response to ribotoxic stress or UV-B irradiation. Acts as the proximal sensor of ribosome collisions during the ribotoxic stress response (RSR). Directly binds to the ribosome by inserting its flexible C-terminus into the ribosomal intersubunit space, thereby acting as a sentinel for colliding ribosomes. Upon ribosome collisions, activates either the stress-activated protein kinase signal transduction cascade or the integrated stress response (ISR), leading to programmed cell death or cell survival, respectively. Dangerous levels of ribosome collisions trigger the autophosphorylation and activation of MAP3K20, which dissociates from colliding ribosomes and phosphorylates MAP kinase kinases, leading to activation of the JNK and MAP kinase p38 pathways that promote programmed cell death. Less dangerous levels of ribosome collisions trigger the integrated stress response (ISR): MAP3K20 activates EIF2AK4/GCN2 independently of its protein-kinase activity, promoting EIF2AK4/GCN2-mediated phosphorylation of EIF2S1/eIF-2-alpha. Also acts as a histone kinase by phosphorylating histone H3 at 'Ser-28' (H3S28ph). In terms of biological role, isoform that lacks the C-terminal region that mediates ribosome-binding: does not act as a sensor of ribosome collisions in response to ribotoxic stress. May act as an antagonist of isoform ZAKalpha: interacts with isoform ZAKalpha, leading to decrease the expression of isoform ZAKalpha. The chain is Mitogen-activated protein kinase kinase kinase 20 from Mus musculus (Mouse).